We begin with the raw amino-acid sequence, 79 residues long: uncharacterized protein (79 aa).

The first 33 residues, 1–33 (MRFIIRTVMLIALVWIGLLLSGYGVLIGSKENA), serve as a signal peptide directing secretion.

This is an uncharacterized protein from Escherichia coli O157:H7.